Reading from the N-terminus, the 932-residue chain is Protocadherin gamma-A8 (932 aa).

Positions 1–29 are cleaved as a signal peptide; that stretch reads MAAPQSRPRRGELILLCALLGTLWEIGRG. Cadherin domains follow at residues 30 to 133, 134 to 242, 243 to 347, 348 to 452, 453 to 562, and 570 to 682; these read QIRY…NPKF, QVED…APVF, PHPI…RPEV, IITS…PPTF, PHAS…APEI, and DGST…KPSV. At 30–692 the chain is on the extracellular side; that stretch reads QIRYSVPEET…DPNDSSLTLY (663 aa). Asparagine 47 carries N-linked (GlcNAc...) asparagine glycosylation. N-linked (GlcNAc...) asparagine glycosylation is found at asparagine 414, asparagine 419, and asparagine 545. Asparagine 685 is a glycosylation site (N-linked (GlcNAc...) asparagine). A helical transmembrane segment spans residues 693-713; that stretch reads LVVAVAAISCVFLAFVAVLLG. Over 714 to 932 the chain is Cytoplasmic; the sequence is LRLRRWHKSH…KKKSGKKEKK (219 aa). 2 disordered regions span residues 804–841 and 902–932; these read ADHG…WPNN and ATLT…KEKK. A compositionally biased stretch (polar residues) spans 810-841; that stretch reads APPNTDWRFSQAQRPGTSGSQNGDDTGTWPNN. Over residues 922 to 932 the composition is skewed to basic residues; it reads NKKKSGKKEKK.

The protein localises to the cell membrane. Potential calcium-dependent cell-adhesion protein. May be involved in the establishment and maintenance of specific neuronal connections in the brain. This Pan troglodytes (Chimpanzee) protein is Protocadherin gamma-A8 (PCDHGA8).